The following is a 225-amino-acid chain: MMYHIPGVLSPKDVARFREQLEQAEWVDGRVTTGAQGAQVKNNQQVDTRSALYAALQNEVLNAVNQHALFFAAALPHTLSTPLFNRYQNNETYGFHVDGAVRSHPQNGWMRTDLSATLFLSDPQSYDGGELVVNDTFGQHRVKLPAGDLVLYPSSSLHCVTPVTRGVRVASFMWIQSMIRDDKKRAMLFDLDNNIQSLKSRYGESEEILSLLNLYHNLLREWSEI.

The region spanning 78-177 (TLSTPLFNRY…RVASFMWIQS (100 aa)) is the Fe2OG dioxygenase domain. Residues His96, Asp98, and His158 each coordinate Fe cation. Arg168 contacts 2-oxoglutarate.

The cofactor is Fe(2+). L-ascorbate serves as cofactor.

The chain is PKHD-type hydroxylase YbiX from Escherichia coli O17:K52:H18 (strain UMN026 / ExPEC).